The following is a 241-amino-acid chain: Large ribosomal subunit protein uL3 (241 aa).

Disordered stretches follow at residues 139–166 (VSHR…PGHM) and 209–241 (KKPL…KEGA). Q151 is subject to N5-methylglutamine.

Belongs to the universal ribosomal protein uL3 family. In terms of assembly, part of the 50S ribosomal subunit. Forms a cluster with proteins L14 and L19. Methylated by PrmB.

Its function is as follows. One of the primary rRNA binding proteins, it binds directly near the 3'-end of the 23S rRNA, where it nucleates assembly of the 50S subunit. The protein is Large ribosomal subunit protein uL3 of Nitrobacter hamburgensis (strain DSM 10229 / NCIMB 13809 / X14).